A 376-amino-acid polypeptide reads, in one-letter code: 2-hydroxypropyl-CoM lyase (376 aa).

Zn(2+) contacts are provided by His-218, Cys-220, and Cys-341.

Belongs to the vitamin-B12 independent methionine synthase family. As to quaternary structure, homohexamer. Component I of the aliphatic epoxide carboxylation complex together with components II, III and IV. Zn(2+) is required as a cofactor.

The enzyme catalyses (R)-2-hydroxypropyl-coenzyme M = (R)-1,2-epoxypropane + coenzyme M. It catalyses the reaction (S)-2-hydroxypropyl-coenzyme M = (S)-1,2-epoxypropane + coenzyme M. It functions in the pathway alkene metabolism; propylene degradation. With respect to regulation, inhibited by methylepoxypropane. Inhibited by the zinc chelator 4-(2-pyridylazo)resorcinol (PAR), in the presence of p- (hydroxymercuri)benzenesulfonic acid (PMPS), and by EDTA. Not inhibited by the coenzyme M analog 2-bromoethanesulfonate (BES). Its function is as follows. Involved in aliphatic epoxide carboxylation. Catalyzes the addition of coenzyme M (CoM) to either R- or S-epoxypropane to form the thioether conjugate 2-hydroxypropyl-CoM. Catalyzes the reaction of CoM with R-epoxypropane at a rate approximately twice of that with S-epoxypropane. The CoM analogs 2-mercaptopropionate, 2-mercaptoethanol and cysteine substitute poorly for CoM as the thiol substrate. The sequence is that of 2-hydroxypropyl-CoM lyase from Xanthobacter autotrophicus (strain ATCC BAA-1158 / Py2).